The primary structure comprises 563 residues: MPQPDKMAAVNNAMPQPAPEKSLSSDPQPESSKKSARFWLIFVAIALTTFLAALDTSIISTALPTITADLGSESLYVWIIDAYLLASTATIPIFAQAANIYGRRSLTLIAVCIFTLGSGLCGGAHNTAMMVGGRAVQGIGGGGILTMSEIVVCDMVSIRERGMYAGIIGGVWAIAAVVAPVMGGAFAQNISWRWIFYINLPIAGVSLVALGLFLKLARPPSGTVKEQMSRIDWGGSVLLIGSVTSIVLALSWGGSEHPWSGWQTIVPLVIGLLALVAFFAYQGAPWLREPTMPLRLFGNRTSSTLLVISFIHSLLLYWVCYFLPVYFQAVKEASPTRSAVMLFPIACTSAPAGVAAGITITKTGKYRVWHFTGFVLMSIACGLFTLLDAQSSTGRWVGFQILFGVGTGTVFTSTLPPILASLPDSDVATATGAWTFIRNFGSIWGVAIPAAVFNNQVNHAAPKISDSTVKSLLVDGGAYEHATQHFIKSLSPNPELKTQVIQVYLEGLKVVWQVSLAFCLLGFILCFFVRSLTLRDELNTEFGLKEEKPNSKNMSSEEGVVRE.

Residues 1–30 (MPQPDKMAAVNNAMPQPAPEKSLSSDPQPE) form a disordered region. A run of 5 helical transmembrane segments spans residues 39-59 (WLIF…TSII), 75-95 (LYVW…PIFA), 105-125 (SLTL…GGAH), 138-158 (GIGG…MVSI), and 167-187 (IIGG…GAFA). The N-linked (GlcNAc...) asparagine glycan is linked to asparagine 189. 3 consecutive transmembrane segments (helical) span residues 194–214 (WIFY…GLFL), 233–253 (WGGS…LSWG), and 261–281 (GWQT…FFAY). The N-linked (GlcNAc...) asparagine glycan is linked to asparagine 299. 6 helical membrane passes run 305 to 325 (LLVI…FLPV), 340 to 360 (VMLF…GITI), 368 to 388 (VWHF…TLLD), 401 to 421 (ILFG…ILAS), 433 to 453 (AWTF…AAVF), and 509 to 529 (KVVW…CFFV). N-linked (GlcNAc...) asparagine glycosylation is present at asparagine 553.

This sequence belongs to the major facilitator superfamily. TCR/Tet family.

It is found in the membrane. Functionally, efflux pump; part of the gene cluster that mediates the biosynthesis of the mycotoxin fusarin C. Within the cluster, FUS1, FUS2, FUS8 and FUS9 are sufficient for fusarin production. The other FUS cluster members are not essential for fusarin C biosynthesis. This is Efflux pump FUS6 from Gibberella moniliformis (strain M3125 / FGSC 7600) (Maize ear and stalk rot fungus).